Reading from the N-terminus, the 253-residue chain is tRNA (guanine-N(1)-)-methyltransferase (253 aa).

S-adenosyl-L-methionine-binding positions include glycine 111 and 131–136; that span reads LGDFVL.

This sequence belongs to the RNA methyltransferase TrmD family. In terms of assembly, homodimer.

It is found in the cytoplasm. It catalyses the reaction guanosine(37) in tRNA + S-adenosyl-L-methionine = N(1)-methylguanosine(37) in tRNA + S-adenosyl-L-homocysteine + H(+). Functionally, specifically methylates guanosine-37 in various tRNAs. The chain is tRNA (guanine-N(1)-)-methyltransferase from Synechococcus sp. (strain JA-3-3Ab) (Cyanobacteria bacterium Yellowstone A-Prime).